The primary structure comprises 502 residues: Glutamate decarboxylase (502 aa).

K278 is modified (N6-(pyridoxal phosphate)lysine). A calmodulin-binding region spans residues 471-502; that stretch reads GLHHFHMDTVETQKDIIKHWRKIAGKKTSGVC.

It belongs to the group II decarboxylase family. Requires pyridoxal 5'-phosphate as cofactor.

It carries out the reaction L-glutamate + H(+) = 4-aminobutanoate + CO2. Functionally, catalyzes the production of GABA. The calmodulin-binding is calcium-dependent and it is proposed that this may, directly or indirectly, form a calcium regulated control of GABA biosynthesis. This Solanum lycopersicum (Tomato) protein is Glutamate decarboxylase.